The sequence spans 227 residues: Sensory transduction protein RegX3 (227 aa).

The Response regulatory domain maps to 3 to 116 (SVLIVEDEES…ELIARIRAVL (114 aa)). Asp52 bears the 4-aspartylphosphate mark. The segment at residues 128–227 (DGVLESGPVR…VRGLGYKLEG (100 aa)) is a DNA-binding region (ompR/PhoB-type).

Phosphorylated by SenX3.

Functionally, member of the two-component regulatory system SenX3/RegX3. Specifically binds to the promoter region of the senX3-regX3 operon. This chain is Sensory transduction protein RegX3, found in Mycobacterium bovis (strain ATCC BAA-935 / AF2122/97).